We begin with the raw amino-acid sequence, 469 residues long: Uronate isomerase (469 aa).

This sequence belongs to the metallo-dependent hydrolases superfamily. Uronate isomerase family.

It carries out the reaction D-glucuronate = D-fructuronate. The catalysed reaction is aldehydo-D-galacturonate = keto-D-tagaturonate. The protein operates within carbohydrate metabolism; pentose and glucuronate interconversion. The protein is Uronate isomerase of Yersinia enterocolitica serotype O:8 / biotype 1B (strain NCTC 13174 / 8081).